A 491-amino-acid chain; its full sequence is Probable aspartyl aminopeptidase (491 aa).

Zn(2+) is bound at residue histidine 90. Histidine 168 lines the substrate pocket. Position 278 (aspartate 278) interacts with Zn(2+). Residue glutamate 315 participates in substrate binding. Residues glutamate 316 and aspartate 361 each contribute to the Zn(2+) site. Aspartate 361, histidine 364, lysine 389, and tyrosine 396 together coordinate substrate. Histidine 455 contacts Zn(2+).

It belongs to the peptidase M18 family. Tetrahedron-shaped homododecamer built from six homodimers. The cofactor is Zn(2+).

The protein localises to the cytoplasm. It catalyses the reaction Release of an N-terminal aspartate or glutamate from a peptide, with a preference for aspartate.. Functionally, likely to play an important role in intracellular protein and peptide metabolism. The chain is Probable aspartyl aminopeptidase from Ricinus communis (Castor bean).